A 76-amino-acid chain; its full sequence is Putative snRNP Sm-like protein (76 aa).

The Sm domain occupies Arg-4 to Glu-76.

This sequence belongs to the snRNP Sm proteins family.

The polypeptide is Putative snRNP Sm-like protein (Thermococcus sibiricus (strain DSM 12597 / MM 739)).